The chain runs to 188 residues: Elongation factor P (188 aa).

The protein belongs to the elongation factor P family.

It localises to the cytoplasm. The protein operates within protein biosynthesis; polypeptide chain elongation. Its function is as follows. Involved in peptide bond synthesis. Stimulates efficient translation and peptide-bond synthesis on native or reconstituted 70S ribosomes in vitro. Probably functions indirectly by altering the affinity of the ribosome for aminoacyl-tRNA, thus increasing their reactivity as acceptors for peptidyl transferase. The chain is Elongation factor P from Sulfurovum sp. (strain NBC37-1).